Consider the following 190-residue polypeptide: Lipid A acyltransferase PagP (190 aa).

The first 18 residues, 1-18, serve as a signal peptide directing secretion; the sequence is MKRLISCLTIICALNASA. Catalysis depends on residues His60, Asp103, and Ser104.

This sequence belongs to the lipid A palmitoyltransferase family. As to quaternary structure, homodimer.

It localises to the cell outer membrane. The enzyme catalyses a lipid A + a 1,2-diacyl-sn-glycero-3-phosphocholine = a hepta-acyl lipid A + a 2-acyl-sn-glycero-3-phosphocholine. It catalyses the reaction a lipid IVA + a 1,2-diacyl-sn-glycero-3-phosphocholine = a lipid IVB + a 2-acyl-sn-glycero-3-phosphocholine. It carries out the reaction a lipid IIA + a 1,2-diacyl-sn-glycero-3-phosphocholine = a lipid IIB + a 2-acyl-sn-glycero-3-phosphocholine. In terms of biological role, transfers a fatty acid residue from the sn-1 position of a phospholipid to the N-linked hydroxyfatty acid chain on the proximal unit of lipid A or its precursors. The chain is Lipid A acyltransferase PagP from Legionella pneumophila (strain Corby).